We begin with the raw amino-acid sequence, 249 residues long: Tryptophan synthase alpha chain (249 aa).

Residues Glu-43 and Asp-54 each act as proton acceptor in the active site.

Belongs to the TrpA family. In terms of assembly, tetramer of two alpha and two beta chains.

It carries out the reaction (1S,2R)-1-C-(indol-3-yl)glycerol 3-phosphate + L-serine = D-glyceraldehyde 3-phosphate + L-tryptophan + H2O. Its pathway is amino-acid biosynthesis; L-tryptophan biosynthesis; L-tryptophan from chorismate: step 5/5. In terms of biological role, the alpha subunit is responsible for the aldol cleavage of indoleglycerol phosphate to indole and glyceraldehyde 3-phosphate. The polypeptide is Tryptophan synthase alpha chain (Campylobacter jejuni subsp. jejuni serotype O:6 (strain 81116 / NCTC 11828)).